The sequence spans 863 residues: Probable beta-glucosidase A (863 aa).

The signal sequence occupies residues 1–19 (MKLGWLEAAALTAASVASA). Asn-65, Asn-214, and Asn-255 each carry an N-linked (GlcNAc...) asparagine glycan. Asp-283 is an active-site residue. N-linked (GlcNAc...) asparagine glycosylation is found at Asn-318, Asn-325, Asn-357, Asn-493, Asn-526, Asn-545, Asn-567, Asn-664, and Asn-715. The interval 720–754 (KESSGDPNYGWDDEDYIPEGAKDGSPQDVLPSGGG) is disordered.

Belongs to the glycosyl hydrolase 3 family.

It is found in the secreted. It catalyses the reaction Hydrolysis of terminal, non-reducing beta-D-glucosyl residues with release of beta-D-glucose.. The protein operates within glycan metabolism; cellulose degradation. In terms of biological role, beta-glucosidases are one of a number of cellulolytic enzymes involved in the degradation of cellulosic biomass. Catalyzes the last step releasing glucose from the inhibitory cellobiose. The sequence is that of Probable beta-glucosidase A (bglA) from Emericella nidulans (strain FGSC A4 / ATCC 38163 / CBS 112.46 / NRRL 194 / M139) (Aspergillus nidulans).